Here is a 418-residue protein sequence, read N- to C-terminus: Glutamyl-tRNA reductase (418 aa).

Substrate is bound by residues 49 to 52, Ser109, 114 to 116, and Gln120; these read TCNR and EPQ. Cys50 (nucleophile) is an active-site residue. 189–194 contacts NADP(+); it reads GAGETI.

Belongs to the glutamyl-tRNA reductase family. Homodimer.

It catalyses the reaction (S)-4-amino-5-oxopentanoate + tRNA(Glu) + NADP(+) = L-glutamyl-tRNA(Glu) + NADPH + H(+). It functions in the pathway porphyrin-containing compound metabolism; protoporphyrin-IX biosynthesis; 5-aminolevulinate from L-glutamyl-tRNA(Glu): step 1/2. Functionally, catalyzes the NADPH-dependent reduction of glutamyl-tRNA(Glu) to glutamate 1-semialdehyde (GSA). In Escherichia coli O139:H28 (strain E24377A / ETEC), this protein is Glutamyl-tRNA reductase.